A 446-amino-acid polypeptide reads, in one-letter code: Argininosuccinate synthase (446 aa).

ATP-binding positions include 17-25 (AFSGGLDTS) and Ala43. Tyr99 is an L-citrulline binding site. Residues Gly129 and Thr131 each coordinate ATP. L-aspartate-binding residues include Thr131, Asn135, and Asp136. Residue Asn135 participates in L-citrulline binding. ATP is bound at residue Asp136. L-citrulline contacts are provided by Arg139 and Ser192. Asp194 is a binding site for ATP. Residues Thr201, Glu203, and Glu280 each contribute to the L-citrulline site.

The protein belongs to the argininosuccinate synthase family. Type 2 subfamily. In terms of assembly, homotetramer.

Its subcellular location is the cytoplasm. The enzyme catalyses L-citrulline + L-aspartate + ATP = 2-(N(omega)-L-arginino)succinate + AMP + diphosphate + H(+). Its pathway is amino-acid biosynthesis; L-arginine biosynthesis; L-arginine from L-ornithine and carbamoyl phosphate: step 2/3. In Variovorax paradoxus (strain S110), this protein is Argininosuccinate synthase.